A 147-amino-acid polypeptide reads, in one-letter code: Angiogenin (147 aa).

The N-terminal stretch at 1–24 is a signal peptide; it reads MVILLGPLLLVFMLGLGLAPLSLA. His-37 functions as the Proton acceptor in the catalytic mechanism. TRNA is bound by residues Arg-45 and Asp-46. Disulfide bonds link Cys-50–Cys-104, Cys-63–Cys-115, and Cys-81–Cys-130. The short motif at 55 to 59 is the Nucleolar localization signal element; sequence KQRGL. Cys-104 and Ile-126 together coordinate tRNA. The active-site Proton donor is His-137.

The protein belongs to the pancreatic ribonuclease family. Homodimer. Interacts with RNH1; inhibiting ANG ribonuclease activity. Interacts with PCNA.

It is found in the secreted. The protein localises to the nucleus. It localises to the nucleolus. The protein resides in the cytoplasm. Its subcellular location is the stress granule. Its activity is regulated as follows. Has weak tRNA ribonuclease activity by itself due to partial autoinhibition by its C-terminus, which folds into a short alpha-helix that partially occludes the substrate-binding site. In absence of stress, the ribonuclease activity is inhibited by RNH1 in the cytoplasm. In response to stress, dissociates from RNH1 in the cytoplasm and associates with cytoplasmic ribosomes with vacant A-sites: ribosomes directly activate the tRNA ribonuclease activity of ANG by refolding the C-terminal alpha-helix. In response to stress, the angiogenic activity of ANG is inhibited by RNH1 in the nucleus. Secreted ribonuclease that can either promote or restrict cell proliferation of target cells, depending on the context. Endocytosed in target cells via its receptor PLXNB2 and translocates to the cytoplasm or nucleus. Under stress conditions, localizes to the cytoplasm and promotes the assembly of stress granules (SGs): specifically cleaves a subset of tRNAs within anticodon loops to produce tRNA-derived stress-induced fragments (tiRNAs), resulting in translation repression and inhibition of cell proliferation. tiRNas also prevent formation of apoptosome, thereby promoting cell survival. Preferentially cleaves RNAs between a pyrimidine and an adenosine residue, suggesting that it cleaves the anticodon loop of tRNA(Ala) (32-UUAGCAU-38) after positions 33 and 36. Cleaves a subset of tRNAs, including tRNA(Ala), tRNA(Glu), tRNA(Gly), tRNA(Lys), tRNA(Val), tRNA(His), tRNA(Asp) and tRNA(Sec). Under growth conditions and in differentiated cells, translocates to the nucleus and stimulates ribosomal RNA (rRNA) transcription, including that containing the initiation site sequences of 45S rRNA, thereby promoting cell growth and proliferation. Angiogenin induces vascularization of normal and malignant tissues via its ability to promote rRNA transcription. Involved in hematopoietic stem and progenitor cell (HSPC) growth and survival by promoting rRNA transcription in growth conditions and inhibiting translation in response to stress, respectively. Mediates the crosstalk between myeloid and intestinal epithelial cells to protect the intestinal epithelial barrier integrity: secreted by myeloid cells and promotes intestinal epithelial cells proliferation and survival. Also mediates osteoclast-endothelial cell crosstalk in growing bone: produced by osteoclasts and protects the neighboring vascular cells against senescence by promoting rRNA transcription. The chain is Angiogenin (ANG) from Sus scrofa (Pig).